The chain runs to 172 residues: RNA silencing suppressor p19 (172 aa).

The span at 1 to 15 (MERAIQGNDAREQAY) shows a compositional bias: basic and acidic residues. The tract at residues 1 to 37 (MERAIQGNDAREQAYGERWNGGSGSSTSPFKLPDESP) is disordered.

This sequence belongs to the tombusvirus protein p19 family. Homodimer.

Viral suppressor of RNA silencing which binds specifically to silencing RNAs (siRNAs). Acts as a molecular caliper to specifically select siRNAs based on the length of the duplex region of the RNA. The sequence is that of RNA silencing suppressor p19 from Capsicum annuum (Capsicum pepper).